Reading from the N-terminus, the 145-residue chain is D-aminoacyl-tRNA deacylase (145 aa).

Residues 137-138 (GP) carry the Gly-cisPro motif, important for rejection of L-amino acids motif.

This sequence belongs to the DTD family. As to quaternary structure, homodimer.

It localises to the cytoplasm. It carries out the reaction glycyl-tRNA(Ala) + H2O = tRNA(Ala) + glycine + H(+). The catalysed reaction is a D-aminoacyl-tRNA + H2O = a tRNA + a D-alpha-amino acid + H(+). Functionally, an aminoacyl-tRNA editing enzyme that deacylates mischarged D-aminoacyl-tRNAs. Also deacylates mischarged glycyl-tRNA(Ala), protecting cells against glycine mischarging by AlaRS. Acts via tRNA-based rather than protein-based catalysis; rejects L-amino acids rather than detecting D-amino acids in the active site. By recycling D-aminoacyl-tRNA to D-amino acids and free tRNA molecules, this enzyme counteracts the toxicity associated with the formation of D-aminoacyl-tRNA entities in vivo and helps enforce protein L-homochirality. The chain is D-aminoacyl-tRNA deacylase from Salmonella enteritidis PT4 (strain P125109).